The primary structure comprises 251 residues: Vacuolar protein sorting-associated protein 37D (251 aa).

Residues 93–182 (AENCADKLQR…RRRERSAQPA (90 aa)) enclose the VPS37 C-terminal domain. Positions 174-251 (RRERSAQPAP…RPSQPEPPHR (78 aa)) are disordered. The segment covering 221–251 (PVPPLKGSPGCPLGPAPLLSPRPSQPEPPHR) has biased composition (pro residues).

The protein belongs to the VPS37 family. Component of the ESCRT-I complex (endosomal sorting complex required for transport I) which consists of TSG101, VPS28, a VPS37 protein (VPS37A to -D) and MVB12A or MVB12B in a 1:1:1:1 stoichiometry. Interacts with TSG101 and MVB12A. Component of the ESCRT-I complex (endosomal sorting complex required for transport I) which consists of TSG101, VPS28, a VPS37 protein (VPS37A to -D) and UBAP1 in a 1:1:1:1 stoichiometry.

It localises to the late endosome membrane. In terms of biological role, component of the ESCRT-I complex, a regulator of vesicular trafficking process. Required for the sorting of endocytic ubiquitinated cargos into multivesicular bodies. May be involved in cell growth and differentiation. The sequence is that of Vacuolar protein sorting-associated protein 37D from Homo sapiens (Human).